Here is a 65-residue protein sequence, read N- to C-terminus: MSEVKFVKPKNVSGHFLKIKCKDCGNVQVVFARPSSVVTCNICGATIAKPTGGVLETSGEVIESL.

Residues Cys-21, Cys-24, Cys-40, and Cys-43 each contribute to the Zn(2+) site. The C4-type zinc finger occupies 21-43; the sequence is CKDCGNVQVVFARPSSVVTCNIC.

The protein belongs to the eukaryotic ribosomal protein eS27 family. Part of the 30S ribosomal subunit. Zn(2+) is required as a cofactor.

In Thermoplasma volcanium (strain ATCC 51530 / DSM 4299 / JCM 9571 / NBRC 15438 / GSS1), this protein is Small ribosomal subunit protein eS27.